The following is a 96-amino-acid chain: ASNSD1 upstream open reading frame protein (96 aa).

Residues 1–10 (MPSRGTRPED) are compositionally biased toward basic and acidic residues. Positions 1–28 (MPSRGTRPEDSSVLIPTDNSTPHKEDLS) are disordered. A coiled-coil region spans residues 23-96 (HKEDLSSKIK…ENLDKTKIKK (74 aa)).

Component of the PAQosome complex which is responsible for the biogenesis of several protein complexes and which consists of R2TP complex members RUVBL1, RUVBL2, RPAP3 and PIH1D1, URI complex members PFDN2, PFDN6, PDRG1, UXT and URI1 as well as ASDURF, POLR2E and DNAAF10/WDR92.

It is found in the cytoplasm. This is ASNSD1 upstream open reading frame protein from Homo sapiens (Human).